The following is a 263-amino-acid chain: MALQIPSLLLSAAVVVLMVLSSPGTEGGDSERHFVFQFKGECYFTNGTQRIRSVDRYIYNREEYLRFDSDVGEYRAVTELGRPDAEYYNKQYLEQTRAELDTVCRHNYEGVETHTSLRRLEQPNVVISLSRTEALNHHNTLVCSVTDFYPAKIKVRWFRNGQEETVGVSSTQLISNGDWTFQVLVMLEMTPRRGEVYTCHVEHPSLKSPITVEWRAQSESARSKMLSGIGGCVLGVIFLGLGLFIRHRSQKGPRGPPPAGLLQ.

A signal peptide spans 1–27 (MALQIPSLLLSAAVVVLMVLSSPGTEG). A beta-1 region spans residues 28–120 (GDSERHFVFQ…VETHTSLRRL (93 aa)). Residues 28 to 224 (GDSERHFVFQ…RAQSESARSK (197 aa)) are Extracellular-facing. 2 cysteine pairs are disulfide-bonded: cysteine 42–cysteine 104 and cysteine 143–cysteine 199. Asparagine 46 carries N-linked (GlcNAc...) asparagine glycosylation. The beta-2 stretch occupies residues 121–214 (EQPNVVISLS…SLKSPITVEW (94 aa)). The Ig-like C1-type domain occupies 123–211 (PNVVISLSRT…EHPSLKSPIT (89 aa)). Positions 215–224 (RAQSESARSK) are connecting peptide. A helical membrane pass occupies residues 225–245 (MLSGIGGCVLGVIFLGLGLFI). The Cytoplasmic portion of the chain corresponds to 246-263 (RHRSQKGPRGPPPAGLLQ).

It belongs to the MHC class II family. Ubiquitinated in immature dendritic cells leading to down-regulation of MHC class II.

The protein localises to the membrane. The polypeptide is H-2 class II histocompatibility antigen, A-S beta chain (H2-Ab1) (Mus musculus (Mouse)).